Consider the following 153-residue polypeptide: Protein eva-1 homolog A (153 aa).

A helical membrane pass occupies residues 37-57; it reads ALYFVCGVCLGLVLTLIALVV. Residues 66 to 97 are disordered; it reads KTQQAPKKTGKTVENTSDTSDSDSDWDNTSDL.

It belongs to the EVA1 family.

It is found in the endoplasmic reticulum membrane. Its subcellular location is the lysosome membrane. Its function is as follows. Acts as a regulator of programmed cell death, mediating both autophagy and apoptosis. This is Protein eva-1 homolog A (Eva1a) from Danio rerio (Zebrafish).